Reading from the N-terminus, the 807-residue chain is Protein WEAK CHLOROPLAST MOVEMENT UNDER BLUE LIGHT 1 (807 aa).

The interval 1-162 (MEDLKTVEAS…GTPKNVDSHR (162 aa)) is disordered. Positions 31-40 (RESNIQSATK) are enriched in polar residues. Low complexity predominate over residues 46 to 73 (QSQTDTEETQQSQTDTEETQQSQTDDTT). The segment covering 138–157 (RTVSSPRFSGSPVSTGTPKN) has biased composition (polar residues). Serine 148 carries the post-translational modification Phosphoserine. Coiled-coil stretches lie at residues 191 to 429 (RMQA…ELVA), 457 to 489 (DLHA…LKLA), 516 to 621 (IAVA…ALEE), and 664 to 724 (AAVS…WRAE). Disordered regions lie at residues 532 to 565 (IASV…EAKS) and 722 to 789 (RAEH…KKKK). Basic and acidic residues-rich tracts occupy residues 537–548 (SKEKDAREKMVE), 722–732 (RAEHEQKRKAG), and 739–749 (KNLKESFEGGK). A compositionally biased stretch (polar residues) spans 761–781 (SSPSESYGTEENSETNLSPQT).

Belongs to the WEB family. As to quaternary structure, interacts with PMI2. As to expression, ubiquitous but preferentially in chloroplast-containing tissues.

The protein resides in the cytoplasm. In terms of biological role, required for the chloroplast avoidance response under high intensity blue light. This avoidance response consists in the relocation of chloroplasts on the anticlinal side of exposed cells. Acts in association with PMI2 to maintain the velocity of chloroplast photorelocation movement via cp-actin filaments regulation. This is Protein WEAK CHLOROPLAST MOVEMENT UNDER BLUE LIGHT 1 (WEB1) from Arabidopsis thaliana (Mouse-ear cress).